An 87-amino-acid chain; its full sequence is Small ribosomal subunit protein bS20 (87 aa).

The disordered stretch occupies residues 1–25 (MANIKSAKKRAVQSEKRRKHNASRR).

It belongs to the bacterial ribosomal protein bS20 family.

In terms of biological role, binds directly to 16S ribosomal RNA. The polypeptide is Small ribosomal subunit protein bS20 (Yersinia pseudotuberculosis serotype O:1b (strain IP 31758)).